The following is a 185-amino-acid chain: Protein-arginine kinase activator protein (185 aa).

Phosphoarginine is present on residues Arg115 and Arg169. Positions 139–174 (RRQIDMLKKELESLIHQEEFENAAHVRDQIRLLEQS) constitute a UVR domain.

As to quaternary structure, interacts with McsB. Phosphorylated on Arg residues by McsB.

In terms of biological role, activates the phosphorylation activity of the protein-arginine kinase McsB. Is required for the delocalization of competence proteins from the cell poles. The protein is Protein-arginine kinase activator protein (mcsA) of Bacillus subtilis (strain 168).